A 704-amino-acid chain; its full sequence is Glycogen [starch] synthase, liver (704 aa).

2 positions are modified to phosphoserine: Ser-8 and Ser-11. Lys-40 contacts UDP. UDP-alpha-D-glucose is bound by residues His-205 and Arg-211. Residues His-291, Glu-292, Gln-294, His-297, and Lys-301 each contribute to the alpha-D-glucose 6-phosphate site. Residue Arg-331 participates in UDP binding. Arg-331 is a UDP-alpha-D-glucose binding site. His-501 contacts alpha-D-glucose 6-phosphate. 3 residues coordinate UDP-alpha-D-glucose: Glu-510, Trp-512, and Gly-513. Residue Thr-515 participates in UDP binding. Residues Arg-582 and Arg-586 each contribute to the alpha-D-glucose 6-phosphate site. Residues 620 to 704 (KFHLEPTSPP…KKKLHGEYKN (85 aa)) form a disordered region. Position 627 is a phosphoserine (Ser-627). Ser-641, Ser-645, Ser-649, and Ser-653 each carry phosphoserine; by GSK3-alpha and GSK3-beta. The segment covering 647-657 (SGSQTSSPQSS) has biased composition (low complexity). Ser-657 carries the post-translational modification Phosphoserine; by CK2. Residues 659 to 675 (VENEGDEDERYDEEEEA) are compositionally biased toward acidic residues. Position 684 is a phosphoserine (Ser-684).

This sequence belongs to the glycosyltransferase 3 family. Part of the glycogen synthase (GS)-glycogenin complex, a heterooctamer composed of a tetramer of GS and 2 dimers of glycogenin, where each GS protomer binds to one glycogenin subunit (via glycogenin C-terminus); the GS tetramer may dissociate from glycogenin dimers to continue glycogen polymerization on its own. May also form a heterooctamer complex with GYG1 (via GYG1 C-terminus). In terms of processing, primed phosphorylation at Ser-657 (site 5) by CSNK2A1 and CSNK2A2 is required for inhibitory phosphorylation at Ser-641 (site 3a), Ser-645 (site 3b), Ser-649 (site 3c) and Ser-653 (site 4) by GSK3A an GSK3B. Dephosphorylation at Ser-641 and Ser-645 by PP1 activates the enzyme. Phosphorylation at Ser-8 is not required for interaction with GYG1. Interaction with GYG1 does not regulate the phosphorylation at Ser-8 and Ser-641. In terms of tissue distribution, specifically expressed in liver (at protein level).

The enzyme catalyses [(1-&gt;4)-alpha-D-glucosyl](n) + UDP-alpha-D-glucose = [(1-&gt;4)-alpha-D-glucosyl](n+1) + UDP + H(+). The protein operates within glycan biosynthesis; glycogen biosynthesis. Allosteric activation by glucose-6-phosphate. Phosphorylation reduces the activity towards UDP-glucose. When in the non-phosphorylated state, glycogen synthase does not require glucose-6-phosphate as an allosteric activator; when phosphorylated it does. Glycogen synthase participates in the glycogen biosynthetic process along with glycogenin and glycogen branching enzyme. Extends the primer composed of a few glucose units formed by glycogenin by adding new glucose units to it. In this context, glycogen synthase transfers the glycosyl residue from UDP-Glc to the non-reducing end of alpha-1,4-glucan. The sequence is that of Glycogen [starch] synthase, liver from Rattus norvegicus (Rat).